A 526-amino-acid chain; its full sequence is Putative D-lactate dehydrogenase C713.03, mitochondrial (526 aa).

The region spanning 93–272 is the FAD-binding PCMH-type domain; it reads YRGKTQLALK…TKLSVICPKR (180 aa).

Belongs to the FAD-binding oxidoreductase/transferase type 4 family. It depends on FAD as a cofactor.

The protein localises to the mitochondrion matrix. The enzyme catalyses (R)-lactate + 2 Fe(III)-[cytochrome c] = 2 Fe(II)-[cytochrome c] + pyruvate + 2 H(+). The protein is Putative D-lactate dehydrogenase C713.03, mitochondrial of Schizosaccharomyces pombe (strain 972 / ATCC 24843) (Fission yeast).